Consider the following 390-residue polypeptide: F-box/kelch-repeat protein At3g04660 (390 aa).

The region spanning 18-67 (YDPSSILPLELKIEILMKSPPKSIAKLGFVSNHWSSIIRGQVFTDLYMRR) is the F-box domain. Kelch repeat units lie at residues 115–161 (FSPP…FGYD) and 272–323 (MVDH…DQRV).

As to quaternary structure, part of a SCF (ASK-cullin-F-box) protein ligase complex. Interacts with SKP1A/ASK1, SKP1B/ASK2, ASK11 and ASK13.

It localises to the nucleus. Its pathway is protein modification; protein ubiquitination. Component of SCF(ASK-cullin-F-box) E3 ubiquitin ligase complexes, which may mediate the ubiquitination and subsequent proteasomal degradation of target proteins. The sequence is that of F-box/kelch-repeat protein At3g04660 from Arabidopsis thaliana (Mouse-ear cress).